We begin with the raw amino-acid sequence, 395 residues long: ATP-dependent RNA helicase eIF4A (395 aa).

The short motif at 22 to 50 (TSFDDLGLKDELLRGIYGYGFENPSSIQQ) is the Q motif element. The Helicase ATP-binding domain occupies 53–223 (ILPVIKGNDV…GKFMRDPVRI (171 aa)). 66–73 (AQSGTGKT) is a binding site for ATP. A DEAD box motif is present at residues 171–174 (DEAD). One can recognise a Helicase C-terminal domain in the interval 234-395 (GIKQFYIDVE…EMPTNIADLI (162 aa)).

Belongs to the DEAD box helicase family. eIF4A subfamily. Component of the eIF4F complex, which composition varies with external and internal environmental conditions. It is composed of at least eIF4A, eIF4E and eIF4G.

It is found in the cytoplasm. It carries out the reaction ATP + H2O = ADP + phosphate + H(+). In terms of biological role, ATP-dependent RNA helicase which is a subunit of the eIF4F complex involved in cap recognition and is required for mRNA binding to ribosome. In the current model of translation initiation, eIF4A unwinds RNA secondary structures in the 5'-UTR of mRNAs which is necessary to allow efficient binding of the small ribosomal subunit, and subsequent scanning for the initiator codon. This is ATP-dependent RNA helicase eIF4A (TIF1) from Yarrowia lipolytica (strain CLIB 122 / E 150) (Yeast).